Here is a 328-residue protein sequence, read N- to C-terminus: Malate dehydrogenase 1 (328 aa).

12 to 18 serves as a coordination point for NAD(+); the sequence is GAAGQIG. Arginine 95 and arginine 101 together coordinate substrate. NAD(+) contacts are provided by residues asparagine 108, glutamine 115, and 132–134; that span reads VGN. Substrate contacts are provided by asparagine 134 and arginine 165. Catalysis depends on histidine 190, which acts as the Proton acceptor.

Belongs to the LDH/MDH superfamily. MDH type 2 family.

The enzyme catalyses (S)-malate + NAD(+) = oxaloacetate + NADH + H(+). Catalyzes the reversible oxidation of malate to oxaloacetate. The protein is Malate dehydrogenase 1 of Albidiferax ferrireducens (strain ATCC BAA-621 / DSM 15236 / T118) (Rhodoferax ferrireducens).